The chain runs to 313 residues: tRNA-cytidine(32) 2-sulfurtransferase (313 aa).

The short motif at 54-59 (SGGKDS) is the PP-loop motif element. Cys-129, Cys-132, and Cys-220 together coordinate [4Fe-4S] cluster.

It belongs to the TtcA family. As to quaternary structure, homodimer. The cofactor is Mg(2+). It depends on [4Fe-4S] cluster as a cofactor.

It localises to the cytoplasm. It catalyses the reaction cytidine(32) in tRNA + S-sulfanyl-L-cysteinyl-[cysteine desulfurase] + AH2 + ATP = 2-thiocytidine(32) in tRNA + L-cysteinyl-[cysteine desulfurase] + A + AMP + diphosphate + H(+). It participates in tRNA modification. Functionally, catalyzes the ATP-dependent 2-thiolation of cytidine in position 32 of tRNA, to form 2-thiocytidine (s(2)C32). The sulfur atoms are provided by the cysteine/cysteine desulfurase (IscS) system. The sequence is that of tRNA-cytidine(32) 2-sulfurtransferase from Methylibium petroleiphilum (strain ATCC BAA-1232 / LMG 22953 / PM1).